Reading from the N-terminus, the 77-residue chain is Translation initiation factor IF-1, chloroplastic (77 aa).

The S1-like domain maps to Met-1–Arg-72.

The protein belongs to the IF-1 family. As to quaternary structure, component of the 30S ribosomal translation pre-initiation complex which assembles on the 30S ribosome in the order IF-2 and IF-3, IF-1 and N-formylmethionyl-tRNA(fMet); mRNA recruitment can occur at any time during PIC assembly.

The protein localises to the plastid. It localises to the chloroplast. Functionally, one of the essential components for the initiation of protein synthesis. Stabilizes the binding of IF-2 and IF-3 on the 30S subunit to which N-formylmethionyl-tRNA(fMet) subsequently binds. Helps modulate mRNA selection, yielding the 30S pre-initiation complex (PIC). Upon addition of the 50S ribosomal subunit IF-1, IF-2 and IF-3 are released leaving the mature 70S translation initiation complex. In Zygnema circumcarinatum (Green alga), this protein is Translation initiation factor IF-1, chloroplastic.